Reading from the N-terminus, the 150-residue chain is MGQYKIWVDADACPNPIKEILFRAAERKSLPLVLVANQMLRVPPSPYISQVRVGSGFDVADQYIVNHVEPTHLVITADIPLAAQVIEKGALALNPRGELYTTDNIRQKLTMRDFMEDLRSSGVHTGGPDALSAADKQAFANSLDKWLVRV.

This sequence belongs to the UPF0178 family.

The chain is UPF0178 protein Shewana3_1627 from Shewanella sp. (strain ANA-3).